A 256-amino-acid polypeptide reads, in one-letter code: Adenylate kinase (256 aa).

49 to 54 provides a ligand contact to ATP; that stretch reads GAGKGT. Positions 69–98 are NMP; sequence ATGDMLREQVQQKTPLGIEAKKIMDAGGLV. Residues Thr-70, Arg-75, 96–98, 125–128, and Gln-132 contribute to the AMP site; these read GLV and GFPR. Residues 166–203 are LID; that stretch reads GRLVHPASGRSYHKEFNPPKKRNVDDVTGEPLIQRSDD. Residues Arg-167 and 176–177 each bind ATP; that span reads SY. AMP is bound by residues Arg-200 and Arg-211. Position 239 (Gln-239) interacts with ATP.

This sequence belongs to the adenylate kinase family. AK2 subfamily. As to quaternary structure, monomer.

Its subcellular location is the cytoplasm. The protein resides in the cytosol. The protein localises to the mitochondrion intermembrane space. The catalysed reaction is AMP + ATP = 2 ADP. Catalyzes the reversible transfer of the terminal phosphate group between ATP and AMP. Plays an important role in cellular energy homeostasis and in adenine nucleotide metabolism. Adenylate kinase activity is critical for regulation of the phosphate utilization and the AMP de novo biosynthesis pathways. The chain is Adenylate kinase from Laccaria bicolor (strain S238N-H82 / ATCC MYA-4686) (Bicoloured deceiver).